A 414-amino-acid chain; its full sequence is Serine hydroxymethyltransferase (414 aa).

(6S)-5,6,7,8-tetrahydrofolate is bound by residues leucine 121 and 125-127; that span reads GHL. Residue lysine 229 is modified to N6-(pyridoxal phosphate)lysine.

It belongs to the SHMT family. In terms of assembly, homodimer. Pyridoxal 5'-phosphate serves as cofactor.

It localises to the cytoplasm. The catalysed reaction is (6R)-5,10-methylene-5,6,7,8-tetrahydrofolate + glycine + H2O = (6S)-5,6,7,8-tetrahydrofolate + L-serine. It functions in the pathway one-carbon metabolism; tetrahydrofolate interconversion. Its pathway is amino-acid biosynthesis; glycine biosynthesis; glycine from L-serine: step 1/1. Functionally, catalyzes the reversible interconversion of serine and glycine with tetrahydrofolate (THF) serving as the one-carbon carrier. This reaction serves as the major source of one-carbon groups required for the biosynthesis of purines, thymidylate, methionine, and other important biomolecules. Also exhibits THF-independent aldolase activity toward beta-hydroxyamino acids, producing glycine and aldehydes, via a retro-aldol mechanism. This chain is Serine hydroxymethyltransferase, found in Thiobacillus denitrificans (strain ATCC 25259 / T1).